The primary structure comprises 264 residues: Major prion protein 1 (264 aa).

The N-terminal stretch at 1–24 (MVKSHIGSWILVLFVAMWSDVALC) is a signal peptide. The tract at residues 25–241 (KKRPKPGGGW…ESEAYYQRGA (217 aa)) is interaction with GRB2, ERI3 and SYN1. Residues 28 to 118 (PKPGGGWNTG…QWNKPSKPKT (91 aa)) are disordered. Repeat copies occupy residues 54 to 62 (SQGGGGWGQ), 63 to 70 (PHGGGWGQ), 71 to 78 (PHGGGWGQ), 79 to 86 (PHGGGWGQ), 87 to 94 (PHGGGWGQ), and 95 to 103 (PHGGGGWGQ). The segment at 54-103 (SQGGGGWGQPHGGGWGQPHGGGWGQPHGGGWGQPHGGGWGQPHGGGGWGQ) is 6 X 8 AA tandem repeats of P-H-G-G-G-W-G-Q. Gly residues predominate over residues 55–107 (QGGGGWGQPHGGGWGQPHGGGWGQPHGGGWGQPHGGGWGQPHGGGGWGQGGTH). The Cu(2+) site is built by H72, G73, G74, H80, G81, G82, H88, G89, G90, H96, G98, and G99. C190 and C225 are joined by a disulfide. N-linked (GlcNAc...) asparagine glycosylation is found at N192 and N208. The GPI-anchor amidated alanine moiety is linked to residue A241. Residues 242-264 (SVILFSSPPVILLISFLIFLIVG) constitute a propeptide, removed in mature form.

It belongs to the prion family. Monomer and homodimer. Has a tendency to aggregate into amyloid fibrils containing a cross-beta spine, formed by a steric zipper of superposed beta-strands. Soluble oligomers may represent an intermediate stage on the path to fibril formation. Copper binding may promote oligomerization. Interacts with GRB2, APP, ERI3/PRNPIP and SYN1. Mislocalized cytosolically exposed PrP interacts with MGRN1; this interaction alters MGRN1 subcellular location and causes lysosomal enlargement. Interacts with KIAA1191.

Its subcellular location is the cell membrane. The protein resides in the golgi apparatus. Its primary physiological function is unclear. Has cytoprotective activity against internal or environmental stresses. May play a role in neuronal development and synaptic plasticity. May be required for neuronal myelin sheath maintenance. May play a role in iron uptake and iron homeostasis. Soluble oligomers are toxic to cultured neuroblastoma cells and induce apoptosis (in vitro). Association with GPC1 (via its heparan sulfate chains) targets PRNP to lipid rafts. Also provides Cu(2+) or Zn(2+) for the ascorbate-mediated GPC1 deaminase degradation of its heparan sulfate side chains. The protein is Major prion protein 1 of Tragelaphus strepsiceros (Greater kudu).